An 850-amino-acid polypeptide reads, in one-letter code: MRGLPNFYHSYTFFFFFLLILFPAYSISANTLSASESLTISSNNTIVSPGNVFELGFFKPGLDSRWYLGIWYKAISKRTYVWVANRDTPLSSSIGTLKISDSNLVVLDQSDTPVWSTNLTGGDVRSPLVAELLDNGNFVLRDSKNSAPDGVLWQSFDFPTDTLLPEMKLGWDAKTGFNRFIRSWKSPDDPSSGDFSFKLETEGFPEIFLWNRESRMYRSGPWNGIRFSGVPEMQPFEYMVFNFTTSKEEVTYSFRITKSDVYSRLSISSSGLLQRFTWIETAQNWNQFWYAPKDQCDEYKECGVYGYCDSNTSPVCNCIKGFKPRNPQVWGLRDGSDGCVRKTLLSCGGGDGFVRLKKMKLPDTTTASVDRGIGVKECEQKCLRDCNCTAFANTDIRGSGSGCVTWTGELFDIRNYAKGGQDLYVRLAATDLEDKRNRSAKIIGSSIGVSVLLLLSFIIFFLWKRKQKRSILIETPIVDHQLRSRDLLMNEVVISSRRHISRENNTDDLELPLMEFEEVAMATNNFSNANKLGQGGFGIVYKGKLLDGQEMAVKRLSKTSVQGTDEFKNEVKLIARLQHINLVRLLACCVDAGEKMLIYEYLENLSLDSHLFDKSRNSKLNWQMRFDIINGIARGLLYLHQDSRFRIIHRDLKASNILLDKYMTPKISDFGMARIFGRDETEANTRKVVGTYGYMSPEYAMDGIFSMKSDVFSFGVLLLEIISSKRNKGFYNSDRDLNLLGCVWRNWKEGKGLEIIDPIITDSSSTFRQHEILRCIQIGLLCVQERAEDRPTMSLVILMLGSESTTIPQPKAPGYCLERSLLDTDSSSSKQRDDESWTVNQITVSVLDAR.

The signal sequence occupies residues 1–26; the sequence is MRGLPNFYHSYTFFFFFLLILFPAYS. Over 27–441 the chain is Extracellular; sequence ISANTLSASE…LEDKRNRSAK (415 aa). Residues 31–153 enclose the Bulb-type lectin domain; sequence TLSASESLTI…KNSAPDGVLW (123 aa). 3 N-linked (GlcNAc...) asparagine glycosylation sites follow: Asn43, Asn118, and Asn242. The EGF-like domain maps to 292–328; it reads PKDQCDEYKECGVYGYCDSNTSPVCNCIKGFKPRNPQ. Disulfide bonds link Cys296/Cys308, Cys302/Cys316, Cys378/Cys403, and Cys382/Cys388. One can recognise a PAN domain in the interval 347 to 428; that stretch reads CGGGDGFVRL…GGQDLYVRLA (82 aa). 2 N-linked (GlcNAc...) asparagine glycosylation sites follow: Asn387 and Asn437. The helical transmembrane segment at 442-462 threads the bilayer; sequence IIGSSIGVSVLLLLSFIIFFL. The Cytoplasmic portion of the chain corresponds to 463 to 850; it reads WKRKQKRSIL…QITVSVLDAR (388 aa). Residues 526–807 form the Protein kinase domain; sequence FSNANKLGQG…LMLGSESTTI (282 aa). Residues 532–540 and Lys554 each bind ATP; that span reads LGQGGFGIV. The caM-binding stretch occupies residues 615–632; it reads SRNSKLNWQMRFDIINGI. Asp651 acts as the Proton acceptor in catalysis.

This sequence belongs to the protein kinase superfamily. Ser/Thr protein kinase family. As to quaternary structure, interacts with PUB9, PUB13, PUB14 and PUB38. As to expression, expressed in the root-hypocotyl transition zone, at the base of lateral roots, axillary buds and pedicels.

Its subcellular location is the cell membrane. The catalysed reaction is L-seryl-[protein] + ATP = O-phospho-L-seryl-[protein] + ADP + H(+). The enzyme catalyses L-threonyl-[protein] + ATP = O-phospho-L-threonyl-[protein] + ADP + H(+). Its function is as follows. Involved in the regulation of cellular expansion and differentiation. The sequence is that of Receptor-like serine/threonine-protein kinase SD1-8 (SD18) from Arabidopsis thaliana (Mouse-ear cress).